A 230-amino-acid polypeptide reads, in one-letter code: MVPEYSRLYKILGYSFKNYTLLVRALTHRSKTKKNYERLEFLGDSILGFVIAEVLYMEFPDLAEGKLSQIRSKLVKGVTLANLALNFKLDEYIILGASEQGGHKREKILEDVFEAIIGAIYLDSDFATVKKVIVNWYKPVISTLNLDDVKVKDSKSKLQEILLQNGLSLPEYSIETIDGKDHEQEFTVKALSNDLNIEVRAKGTSRKKAEQKAAEKMIQILSQQGLHEKK.

Residues 5-125 (YSRLYKILGY…IIGAIYLDSD (121 aa)) enclose the RNase III domain. Glu40 provides a ligand contact to Mg(2+). Residue Asp44 is part of the active site. The Mg(2+) site is built by Asp111 and Glu114. Residue Glu114 is part of the active site. Positions 153–223 (DSKSKLQEIL…AEKMIQILSQ (71 aa)) constitute a DRBM domain.

Belongs to the ribonuclease III family. As to quaternary structure, homodimer. Mg(2+) is required as a cofactor.

The protein localises to the cytoplasm. It carries out the reaction Endonucleolytic cleavage to 5'-phosphomonoester.. Its function is as follows. Digests double-stranded RNA. Involved in the processing of primary rRNA transcript to yield the immediate precursors to the large and small rRNAs (23S and 16S). Processes some mRNAs, and tRNAs when they are encoded in the rRNA operon. Processes pre-crRNA and tracrRNA of type II CRISPR loci if present in the organism. The polypeptide is Ribonuclease 3 (Francisella philomiragia subsp. philomiragia (strain ATCC 25017 / CCUG 19701 / FSC 153 / O#319-036)).